A 489-amino-acid chain; its full sequence is Aerolysin (489 aa).

The N-terminal stretch at 1-24 is a signal peptide; it reads MMNRIITANLANLASSLMLAQVLG. 2 disulfides stabilise this stretch: cysteine 44/cysteine 100 and cysteine 184/cysteine 189. The segment at 70–86 is interaction with host N-linked glycan; sequence WQITGLADRWVIMGPGY. The segment at 257 to 289 is part of the transmembrane beta-barrel after proteolytic activation of the toxin and insertion into the host membrane; the sequence is YSLSEKVTTKNKFQWPLVGETELAIEIAASQSW. Residues 347–356 form an interaction with glycans from host GPI-anchor region; the sequence is RWGGNAWYTH. A propeptide spanning residues 445 to 489 is cleaved from the precursor; sequence TRSAKAAQLRSASAEEVALTSVDLDSEALANEGFGNVSLTIVPVQ.

The protein belongs to the aerolysin family. Homodimer in solution; homoheptamer in the host membrane. After binding to GPI-anchored proteins in target membranes and proteolytic removal of the C-terminal propeptide, the protein assembles into a heptameric pre-pore complex. A further conformation change leads to insertion into the host membrane. Proteolytic cleavage and subsequent release of the propeptide trigger a major conformation change, leading to the formation of a heptameric pre-pore that then inserts into the host membrane.

The protein resides in the secreted. It localises to the host cell membrane. Its function is as follows. Secreted, cytolytic toxin that forms pores in host membranes after proteolytic removal of a C-terminal propeptide, leading to destruction of the membrane permeability barrier and cell death. The pores are formed by transmembrane beta-strands and are approximately 3 nm in diameter. This Aeromonas salmonicida protein is Aerolysin (ash3).